Here is a 361-residue protein sequence, read N- to C-terminus: MKPSIHSLAHQTMQEWVLEQGEKKFRADQIWEWLYRKRVQSFEEMTNLSKDLIAKLNDQFVVNPLKQRIVQESADGTVKYLFELPDGMLIETVLMRQHYGLSVCVTTQVDCNIGCTFCASDLIKKQRDLNNGEIVAQIMLVQKYFAERGQDERVSHIVVMGIGEPFDNYNNVLNFVCTINDDKGMAIGARHITVSTSGLAHKIRNFADEGVQVNLAVSLHAPNNELRSSIMKINRAFPIEKLFAAIEYYIETTNRRVTFEYIMLNEVNDSVEQALELAELLKNIKKLSYVNLIPYNPVSEHDQYSRSPKERVLAFYDTLKKKGGNCVVRQEYGTDIDAACGQLRSNTMKRDRQKAVAEVNP.

E91 functions as the Proton acceptor in the catalytic mechanism. Residues 97–329 form the Radical SAM core domain; sequence QHYGLSVCVT…KKKGGNCVVR (233 aa). A disulfide bond links C104 and C340. 3 residues coordinate [4Fe-4S] cluster: C111, C115, and C118. Residues 163–164, S195, 218–220, and N296 each bind S-adenosyl-L-methionine; these read GE and SLH. The active-site S-methylcysteine intermediate is C340.

Belongs to the radical SAM superfamily. RlmN family. Requires [4Fe-4S] cluster as cofactor.

The protein resides in the cytoplasm. It carries out the reaction adenosine(2503) in 23S rRNA + 2 reduced [2Fe-2S]-[ferredoxin] + 2 S-adenosyl-L-methionine = 2-methyladenosine(2503) in 23S rRNA + 5'-deoxyadenosine + L-methionine + 2 oxidized [2Fe-2S]-[ferredoxin] + S-adenosyl-L-homocysteine. The catalysed reaction is adenosine(37) in tRNA + 2 reduced [2Fe-2S]-[ferredoxin] + 2 S-adenosyl-L-methionine = 2-methyladenosine(37) in tRNA + 5'-deoxyadenosine + L-methionine + 2 oxidized [2Fe-2S]-[ferredoxin] + S-adenosyl-L-homocysteine. Functionally, specifically methylates position 2 of adenine 2503 in 23S rRNA and position 2 of adenine 37 in tRNAs. The sequence is that of Probable dual-specificity RNA methyltransferase RlmN from Streptococcus pneumoniae serotype 2 (strain D39 / NCTC 7466).